The following is a 199-amino-acid chain: 3-isopropylmalate dehydratase small subunit (199 aa).

The protein belongs to the LeuD family. LeuD type 1 subfamily. Heterodimer of LeuC and LeuD.

The catalysed reaction is (2R,3S)-3-isopropylmalate = (2S)-2-isopropylmalate. It participates in amino-acid biosynthesis; L-leucine biosynthesis; L-leucine from 3-methyl-2-oxobutanoate: step 2/4. Catalyzes the isomerization between 2-isopropylmalate and 3-isopropylmalate, via the formation of 2-isopropylmaleate. The polypeptide is 3-isopropylmalate dehydratase small subunit (Bacillus pumilus (strain SAFR-032)).